The following is an 876-amino-acid chain: Alanine--tRNA ligase (876 aa).

Zn(2+) contacts are provided by H568, H572, C670, and H674.

The protein belongs to the class-II aminoacyl-tRNA synthetase family. Requires Zn(2+) as cofactor.

It is found in the cytoplasm. The catalysed reaction is tRNA(Ala) + L-alanine + ATP = L-alanyl-tRNA(Ala) + AMP + diphosphate. In terms of biological role, catalyzes the attachment of alanine to tRNA(Ala) in a two-step reaction: alanine is first activated by ATP to form Ala-AMP and then transferred to the acceptor end of tRNA(Ala). Also edits incorrectly charged Ser-tRNA(Ala) and Gly-tRNA(Ala) via its editing domain. The chain is Alanine--tRNA ligase from Geotalea uraniireducens (strain Rf4) (Geobacter uraniireducens).